The sequence spans 231 residues: uncharacterized protein (231 aa).

A helical transmembrane segment spans residues 86-106 (LIILFVIGLIITIIGLLMYEP).

Its subcellular location is the membrane. This is an uncharacterized protein from Methanocaldococcus jannaschii (strain ATCC 43067 / DSM 2661 / JAL-1 / JCM 10045 / NBRC 100440) (Methanococcus jannaschii).